The primary structure comprises 266 residues: 3-methyl-2-oxobutanoate hydroxymethyltransferase (266 aa).

Aspartate 45 and aspartate 84 together coordinate Mg(2+). Residues aspartate 45–serine 46, aspartate 84, and lysine 112 contribute to the 3-methyl-2-oxobutanoate site. Position 114 (glutamate 114) interacts with Mg(2+). The Proton acceptor role is filled by glutamate 181.

This sequence belongs to the PanB family. Homodecamer; pentamer of dimers. Mg(2+) is required as a cofactor.

It localises to the cytoplasm. The catalysed reaction is 3-methyl-2-oxobutanoate + (6R)-5,10-methylene-5,6,7,8-tetrahydrofolate + H2O = 2-dehydropantoate + (6S)-5,6,7,8-tetrahydrofolate. It functions in the pathway cofactor biosynthesis; (R)-pantothenate biosynthesis; (R)-pantoate from 3-methyl-2-oxobutanoate: step 1/2. Functionally, catalyzes the reversible reaction in which hydroxymethyl group from 5,10-methylenetetrahydrofolate is transferred onto alpha-ketoisovalerate to form ketopantoate. The sequence is that of 3-methyl-2-oxobutanoate hydroxymethyltransferase from Pseudomonas putida (strain ATCC 700007 / DSM 6899 / JCM 31910 / BCRC 17059 / LMG 24140 / F1).